An 872-amino-acid polypeptide reads, in one-letter code: Cyanophycin synthetase (872 aa).

The ATP-grasp domain maps to 224–480 (KTILQDAGVP…VAAPVMDMLF (257 aa)). 495–501 (GTNGKTT) contributes to the ATP binding site.

It in the C-terminal section; belongs to the MurCDEF family. Homodimer.

It carries out the reaction [L-4-(L-arginin-2-N-yl)aspartate](n) + L-aspartate + ATP = [L-4-(L-arginin-2-N-yl)aspartate](n)-L-aspartate + ADP + phosphate + H(+). It catalyses the reaction [L-4-(L-arginin-2-N-yl)aspartate](n)-L-aspartate + L-arginine + ATP = [L-4-(L-arginin-2-N-yl)aspartate](n+1) + ADP + phosphate + H(+). In terms of biological role, catalyzes the ATP-dependent polymerization of arginine and aspartate to multi-L-arginyl-poly-L-aspartic acid (cyanophycin; a water-insoluble reserve polymer). The chain is Cyanophycin synthetase (cphA) from Crocosphaera subtropica (strain ATCC 51142 / BH68) (Cyanothece sp. (strain ATCC 51142)).